A 186-amino-acid polypeptide reads, in one-letter code: Peptide deformylase (186 aa).

The Fe cation site is built by C113 and H156. E157 is an active-site residue. A Fe cation-binding site is contributed by H160.

The protein belongs to the polypeptide deformylase family. Requires Fe(2+) as cofactor.

The enzyme catalyses N-terminal N-formyl-L-methionyl-[peptide] + H2O = N-terminal L-methionyl-[peptide] + formate. Removes the formyl group from the N-terminal Met of newly synthesized proteins. Requires at least a dipeptide for an efficient rate of reaction. N-terminal L-methionine is a prerequisite for activity but the enzyme has broad specificity at other positions. This chain is Peptide deformylase, found in Limosilactobacillus reuteri (strain DSM 20016) (Lactobacillus reuteri).